A 111-amino-acid polypeptide reads, in one-letter code: Microtubule nucleation factor SSNA1 (111 aa).

A coiled-coil region spans residues 6–71; that stretch reads QALQNHNNEL…ARKTETKNEY (66 aa).

Belongs to the SSNA1 family. As to quaternary structure, self-assembles into fibrils in a head-to-tail fashion.

It localises to the cytoplasm. The protein localises to the cytoskeleton. The protein resides in the flagellum basal body. Its subcellular location is the flagellum axoneme. Its function is as follows. Microtubule-binding protein which stabilizes dynamic microtubules by slowing growth and shrinkage at both plus and minus ends and serves as a sensor of microtubule damage. Induces microtubule branching which is mediated by the formation of long SSNA1 fibrils which guide microtubule protofilaments to split apart from the mother microtubule and form daughter microtubules. Required for cell division. This chain is Microtubule nucleation factor SSNA1, found in Chlamydomonas reinhardtii (Chlamydomonas smithii).